The chain runs to 467 residues: Probable glycerol-3-phosphate dehydrogenase [NAD(+)] 2, cytosolic (467 aa).

NAD(+) is bound by residues 47–52, lysine 195, and alanine 234; that span reads GAGAWG. Lysine 195 contacts substrate. Residue lysine 284 is the Proton acceptor of the active site. NAD(+) contacts are provided by arginine 346 and glutamine 374. A substrate-binding site is contributed by 346–347; the sequence is RN.

Belongs to the NAD-dependent glycerol-3-phosphate dehydrogenase family.

It localises to the cytoplasm. Its subcellular location is the cytosol. It catalyses the reaction sn-glycerol 3-phosphate + NAD(+) = dihydroxyacetone phosphate + NADH + H(+). May be involved in cell redox homeostasis. The protein is Probable glycerol-3-phosphate dehydrogenase [NAD(+)] 2, cytosolic of Oryza sativa subsp. japonica (Rice).